We begin with the raw amino-acid sequence, 1085 residues long: Solute carrier family 12 member 4 (1085 aa).

The Cytoplasmic portion of the chain corresponds to 1–119 (MPHFTVVPVD…RRAAEAPSMG (119 aa)). A phosphoserine mark is found at serine 24, serine 47, serine 51, serine 81, and serine 88. A discontinuously helical transmembrane segment spans residues 120–141 (TLMGVYLPCLQNIFGVILFLRL). K(+) is bound by residues asparagine 131 and isoleucine 132. The Extracellular segment spans residues 142–149 (TWMVGTAG). Residues 150–172 (VLQALLIVLICCCCTLLTAISMS) traverse the membrane as a helical segment. The Cytoplasmic segment spans residues 173-196 (AIATNGVVPAGGSYFMISRSLGPE). Residues 197-225 (FGGAVGLCFYLGTTFAAAMYILGAIEILL) traverse the membrane as a helical segment. Tyrosine 216 lines the K(+) pocket. The Extracellular portion of the chain corresponds to 226 to 248 (TYIAPPAAIFYPSGAHDTSNATL). A glycan (N-linked (GlcNAc...) asparagine) is linked at asparagine 245. The next 2 helical transmembrane spans lie at 249 to 271 (NNMR…VGVK) and 272 to 297 (YVNK…GGIK). Over 298-419 (SIFDPPVFPV…LYVVADIATS (122 aa)) the chain is Extracellular. Cysteines 308 and 323 form a disulfide. Asparagine 312, asparagine 331, asparagine 347, and asparagine 361 each carry an N-linked (GlcNAc...) asparagine glycan. A disulfide bond links cysteine 343 and cysteine 353. The helical transmembrane segment at 420–440 (FTVLVGIFFPSVTGIMAGSNR) threads the bilayer. The K(+) site is built by proline 429 and threonine 432. Residues glycine 433, isoleucine 434, and methionine 435 each coordinate chloride. Residues 441-450 (SGDLRDAQKS) are Cytoplasmic-facing. Residues 451-473 (IPVGTILAIITTSLVYFSSVVLF) traverse the membrane as a helical segment. Residues 474–504 (GACIEGVVLRDKYGDGVSRNLVVGTLAWPSP) are Extracellular-facing. Residues 505 to 531 (WVIVIGSFFSTCGAGLQSLTGAPRLLQ) form a helical membrane-spanning segment. At 532–554 (AIAKDNIIPFLRVFGHGKVNGEP) the chain is on the cytoplasmic side. 2 helical membrane-spanning segments follow: residues 555 to 575 (TWAL…ASLD) and 576 to 598 (MVAP…ACAV). Tyrosine 589 contributes to the chloride binding site. The Cytoplasmic portion of the chain corresponds to 599-612 (QTLLRTPNWRPRFK). 2 helical membrane passes run 613-635 (YYHW…VSSW) and 636-651 (YYAL…IYKY). Residues 652 to 1085 (IEYQGAEKEW…GGREVITIYS (434 aa)) lie on the Cytoplasmic side of the membrane. Residues 665–681 (IRGLSLSAARYALLRLE) are scissor helix. Leucine 697, lysine 699, lysine 707, tyrosine 708, and valine 730 together coordinate ATP. Serine 734 bears the Phosphoserine mark. Positions 794, 795, and 797 each coordinate ATP. Residues serine 916 and serine 967 each carry the phosphoserine modification. Phosphothreonine is present on threonine 983. Serine 1050 carries the phosphoserine modification.

This sequence belongs to the SLC12A transporter family. K/Cl co-transporter subfamily. As to quaternary structure, homodimer; adopts a domain-swap conformation at the scissor helices connecting the transmembrane domain and C-terminal domain. Heterodimer with other K-Cl cotransporters. Phosphorylated, phosphorylation may regulate transporter activity. Ubiquitous. Levels are much higher in erythrocytes from patients with Hb SC and Hb SS compared to normal AA erythrocytes. This may contribute to red blood cell dehydration and to the manifestation of sickle cell disease by increasing the intracellular concentration of HbS. As to expression, not detected in circulating reticulocytes.

It localises to the cell membrane. It catalyses the reaction K(+)(in) + chloride(in) = K(+)(out) + chloride(out). Its activity is regulated as follows. Inhibited by WNK3. In terms of biological role, mediates electroneutral potassium-chloride cotransport when activated by cell swelling. May contribute to cell volume homeostasis in single cells. May be involved in the regulation of basolateral Cl(-) exit in NaCl absorbing epithelia. Functionally, no transporter activity. The chain is Solute carrier family 12 member 4 from Homo sapiens (Human).